The following is a 203-amino-acid chain: Small ribosomal subunit protein uS4 (203 aa).

Positions 92–164 (TRLDSVVYLL…LEENRIRNVP (73 aa)) constitute an S4 RNA-binding domain.

This sequence belongs to the universal ribosomal protein uS4 family. As to quaternary structure, part of the 30S ribosomal subunit. Contacts protein S5. The interaction surface between S4 and S5 is involved in control of translational fidelity.

Functionally, one of the primary rRNA binding proteins, it binds directly to 16S rRNA where it nucleates assembly of the body of the 30S subunit. Its function is as follows. With S5 and S12 plays an important role in translational accuracy. In Opitutus terrae (strain DSM 11246 / JCM 15787 / PB90-1), this protein is Small ribosomal subunit protein uS4.